The sequence spans 468 residues: 3-isopropylmalate dehydratase large subunit (468 aa).

The [4Fe-4S] cluster site is built by cysteine 349, cysteine 409, and cysteine 412.

This sequence belongs to the aconitase/IPM isomerase family. LeuC type 1 subfamily. Heterodimer of LeuC and LeuD. [4Fe-4S] cluster serves as cofactor.

The enzyme catalyses (2R,3S)-3-isopropylmalate = (2S)-2-isopropylmalate. The protein operates within amino-acid biosynthesis; L-leucine biosynthesis; L-leucine from 3-methyl-2-oxobutanoate: step 2/4. Functionally, catalyzes the isomerization between 2-isopropylmalate and 3-isopropylmalate, via the formation of 2-isopropylmaleate. The chain is 3-isopropylmalate dehydratase large subunit from Jannaschia sp. (strain CCS1).